The chain runs to 216 residues: 4-hydroxy-tetrahydrodipicolinate reductase (216 aa).

NAD(+)-binding positions include 9–12, 71–73, and 95–98; these read SGRM, GTT, and AYNF. Catalysis depends on histidine 127, which acts as the Proton donor/acceptor. Histidine 128 serves as a coordination point for (S)-2,3,4,5-tetrahydrodipicolinate. Lysine 131 serves as a coordination point for NAD(+). The active-site Proton donor is lysine 131. Position 137–138 (137–138) interacts with (S)-2,3,4,5-tetrahydrodipicolinate; that stretch reads GT.

The protein belongs to the DapB family. Homotetramer.

The protein localises to the cytoplasm. It catalyses the reaction (S)-2,3,4,5-tetrahydrodipicolinate + NAD(+) + H2O = (2S,4S)-4-hydroxy-2,3,4,5-tetrahydrodipicolinate + NADH + H(+). The enzyme catalyses (S)-2,3,4,5-tetrahydrodipicolinate + NADP(+) + H2O = (2S,4S)-4-hydroxy-2,3,4,5-tetrahydrodipicolinate + NADPH + H(+). Its pathway is amino-acid biosynthesis; L-lysine biosynthesis via DAP pathway; (S)-tetrahydrodipicolinate from L-aspartate: step 4/4. Its activity is regulated as follows. Is inhibited by high concentrations of NADH. Catalyzes the conversion of 4-hydroxy-tetrahydrodipicolinate (HTPA) to tetrahydrodipicolinate. Uses NADPH as a reductant with much more efficiency than NADH. In Thermotoga maritima (strain ATCC 43589 / DSM 3109 / JCM 10099 / NBRC 100826 / MSB8), this protein is 4-hydroxy-tetrahydrodipicolinate reductase.